The chain runs to 236 residues: MSYNLTDPYEIARFIKESKKSTPVKVYVNGDLSNAEMNDVEWYGSNGFYILMGESDSITKIVLDNKHLIKHFRIENDRRNSAIPMLDLLEVDARIEPGAIIRDKVTIGKNAVIMMGAVINIGAEIGDGTMVDMNAVVGARGQLGKNVHLGAGAVVAGVLEPPSKEPCMIGDNALIGANSVILEGVKIGAGSVVAAGSVVTEDVPDNVVVAGSPAKIIKAVDDKTKDKTQILDDLRK.

This sequence belongs to the transferase hexapeptide repeat family. DapH subfamily.

It carries out the reaction (S)-2,3,4,5-tetrahydrodipicolinate + acetyl-CoA + H2O = L-2-acetamido-6-oxoheptanedioate + CoA. It participates in amino-acid biosynthesis; L-lysine biosynthesis via DAP pathway; LL-2,6-diaminopimelate from (S)-tetrahydrodipicolinate (acetylase route): step 1/3. Its function is as follows. Catalyzes the transfer of an acetyl group from acetyl-CoA to tetrahydrodipicolinate. This is 2,3,4,5-tetrahydropyridine-2,6-dicarboxylate N-acetyltransferase from Clostridium beijerinckii (strain ATCC 51743 / NCIMB 8052) (Clostridium acetobutylicum).